The primary structure comprises 1876 residues: Phenolphthiocerol/phthiocerol polyketide synthase subunit A (1876 aa).

A Carrier 1 domain is found at 9–83 (ADLRHWLIDY…ALAAYLAAPE (75 aa)). S43 is subject to O-(pantetheine 4'-phosphoryl)serine. One can recognise a Ketosynthase family 3 (KS3) domain in the interval 101–526 (DEPIAVVGMG…GTNAHVVIEQ (426 aa)). Catalysis depends on for beta-ketoacyl synthase activity residues C273, H408, and H448. The interval 626-950 (SPGPGTVFVY…NLNKAHTIHP (325 aa)) is acyltransferase. S720 (for malonyltransferase activity) is an active-site residue. The interval 997 to 1112 (HTTVATVSAS…AQLSSSPSDS (116 aa)) is N-terminal hotdog fold. The 271-residue stretch at 997-1267 (HTTVATVSAS…YRALDFGLDV (271 aa)) folds into the PKS/mFAS DH domain. H1027 functions as the Proton acceptor; for dehydratase activity in the catalytic mechanism. The tract at residues 1102–1130 (TAQLSSSPSDSASSLNEHHRANGQPPERA) is disordered. Low complexity predominate over residues 1106–1115 (SSSPSDSASS). A C-terminal hotdog fold region spans residues 1130–1267 (AHRDLIPDLA…YRALDFGLDV (138 aa)). Residue D1186 is the Proton donor; for dehydratase activity of the active site. 1491-1551 (AAYLITGGLG…RRRIDAIRAL (61 aa)) is an NADP(+) binding site. Positions 1491–1728 (AAYLITGGLG…DGYDVAQAVV (238 aa)) are beta-ketoacyl reductase. Residues 1759–1836 (EVRSELEQGL…SLASYLAKRV (78 aa)) form the Carrier 2 domain. Position 1796 is an O-(pantetheine 4'-phosphoryl)serine (S1796).

Requires NADP(+) as cofactor. The cofactor is pantetheine 4'-phosphate.

The enzyme catalyses icosanoyl-[(phenol)carboxyphthiodiolenone synthase] + 2 (S)-methylmalonyl-CoA + 3 malonyl-CoA + 5 NADPH + 10 H(+) = C32-carboxyphthiodiolenone-[(phenol)carboxyphthiodiolenone synthase] + 5 CO2 + 5 NADP(+) + 5 CoA + 2 H2O. The catalysed reaction is docosanoyl-[(phenol)carboxyphthiodiolenone synthase] + 2 (S)-methylmalonyl-CoA + 3 malonyl-CoA + 5 NADPH + 10 H(+) = C34-carboxyphthiodiolenone-[(phenol)carboxyphthiodiolenone synthase] + 5 CO2 + 5 NADP(+) + 5 CoA + 2 H2O. It catalyses the reaction 17-(4-hydroxyphenyl)heptadecanoyl-[(phenol)carboxyphthiodiolenone synthase] + 2 (S)-methylmalonyl-CoA + 3 malonyl-CoA + 5 NADPH + 10 H(+) = C35-(phenol)carboxyphthiodiolenone-[(phenol)carboxyphthiodiolenone synthase] + 5 CO2 + 5 NADP(+) + 5 CoA + 2 H2O. It carries out the reaction 19-(4-hydroxyphenyl)nonadecanoyl-[(phenol)carboxyphthiodiolenone synthase] + 2 (S)-methylmalonyl-CoA + 3 malonyl-CoA + 5 NADPH + 10 H(+) = C37-(phenol)carboxyphthiodiolenone-[(phenol)carboxyphthiodiolenone synthase] + 5 CO2 + 5 NADP(+) + 5 CoA + 2 H2O. The protein operates within lipid metabolism; fatty acid biosynthesis. Its function is as follows. Part of the PpsABCDE complex involved in the biosynthesis of the lipid core common to phthiocerols and phenolphthiocerols by successive additions of malonyl-CoA or methylmalonyl-CoA extender units. PpsA can accept as substrate the activated forms of either icosanoyl (C20), docosanoyl (C22) or lignoceroyl (C24) groups from FadD26, or a (4-hydroxyphenyl)-C17 or (4-hydroxyphenyl)-C19 fatty acyl from FadD29. PpsA initiates the biosynthesis and extends its substrate using a malonyl-CoA extender unit. The PpsB and PpsC proteins add the second and third malonyl-CoA extender units. PpsD adds an (R)-methylmalonyl unit and PpsE adds a second (R)-methylmalonyl unit. The incorporation of the methylmalonyl units results in formation of two branched methyl groups in the elongated product. The protein is Phenolphthiocerol/phthiocerol polyketide synthase subunit A (ppsA) of Mycobacterium tuberculosis (strain CDC 1551 / Oshkosh).